The sequence spans 124 residues: MHDPHGHAHTVRPPGRGRNWPGPWRKTPGRLLGTSFVRLYQLTLSGFVGNSCRHLPTCSEYAHEAIARHGLWAGGWMGFFRVLRCGPFGTHGIDLVPEVLADRYVWFMPWRYWRIGRKRAETRA.

The tract at residues 1-24 (MHDPHGHAHTVRPPGRGRNWPGPW) is disordered. Residues 12–24 (RPPGRGRNWPGPW) are compositionally biased toward low complexity.

It belongs to the UPF0161 family.

It localises to the cell inner membrane. In terms of biological role, could be involved in insertion of integral membrane proteins into the membrane. This is Putative membrane protein insertion efficiency factor from Mesorhizobium japonicum (strain LMG 29417 / CECT 9101 / MAFF 303099) (Mesorhizobium loti (strain MAFF 303099)).